A 187-amino-acid polypeptide reads, in one-letter code: Elongation factor P (187 aa).

It belongs to the elongation factor P family.

It is found in the cytoplasm. The protein operates within protein biosynthesis; polypeptide chain elongation. In terms of biological role, involved in peptide bond synthesis. Stimulates efficient translation and peptide-bond synthesis on native or reconstituted 70S ribosomes in vitro. Probably functions indirectly by altering the affinity of the ribosome for aminoacyl-tRNA, thus increasing their reactivity as acceptors for peptidyl transferase. The protein is Elongation factor P of Kocuria rhizophila (strain ATCC 9341 / DSM 348 / NBRC 103217 / DC2201).